The sequence spans 416 residues: Cysteate synthase (416 aa).

K104 is modified (N6-(pyridoxal phosphate)lysine). N130 contributes to the pyridoxal 5'-phosphate binding site.

This sequence belongs to the threonine synthase family. Cysteate synthase subfamily. As to quaternary structure, homotrimer. Pyridoxal 5'-phosphate is required as a cofactor.

It carries out the reaction O-phospho-L-serine + sulfite + H(+) = L-cysteate + phosphate. Its pathway is cofactor biosynthesis; coenzyme M biosynthesis. Its activity is regulated as follows. Is inhibited by AP3 (DL-2-amino-3-phosphonopropionate) and, to a lesser extent, by L-aspartate or AP4 (DL-2-amino-4-phosphonobutyrate). Is also inhibited by EDTA in vitro. Specifically catalyzes the beta-elimination of phosphate from L-phosphoserine and the beta-addition of sulfite to the dehydroalanine intermediate to produce L-cysteate. Does not display threonine synthase activity like the paralog protein ThrC. The polypeptide is Cysteate synthase (Methanosarcina acetivorans (strain ATCC 35395 / DSM 2834 / JCM 12185 / C2A)).